We begin with the raw amino-acid sequence, 471 residues long: Secretogranin-3 (471 aa).

A signal peptide spans 1-22 (MGFLWTGSWILVLVLNSGPIQA). Disordered stretches follow at residues 24 to 73 (PKPE…SNFS), 92 to 145 (KAKQ…HQLD), 208 to 231 (ANNY…KIPE), and 345 to 405 (KLEK…DEAK). Over residues 28 to 45 (GSQDKSLHNRELSAERPL) the composition is skewed to basic and acidic residues. S40 carries the phosphoserine modification. S40 carries an O-linked (Xyl...) (chondroitin sulfate) serine glycan. Positions 62–73 (PSESKPSESNFS) are enriched in low complexity. Composition is skewed to basic and acidic residues over residues 106-142 (LNVD…DGLH), 214-231 (APEK…KIPE), 345-355 (KLEKNTTDSKS), and 363-405 (EKSH…DEAK). S365 bears the Phosphoserine mark.

In terms of assembly, interacts with CHGA. Interacts with secretogranin II/SCG2. Interacts (via C-terminus) with CPE. In terms of tissue distribution, expression restricted to the brain and pituitary gland. Not detected in the adrenal gland.

It localises to the cytoplasmic vesicle. Its subcellular location is the secretory vesicle. The protein localises to the secretory vesicle membrane. The protein resides in the secreted. Functionally, member of the granin protein family that regulates the biogenesis of secretory granules. Acts as a sorting receptor for intragranular proteins including chromogranin A/CHGA. May also play a role in angiogenesis. Promotes endothelial proliferation, migration and tube formation through MEK/ERK signaling pathway. The sequence is that of Secretogranin-3 (Scg3) from Rattus norvegicus (Rat).